The primary structure comprises 156 residues: Cytochrome c-type biogenesis protein CcmE 2 (156 aa).

Over 1–8 (MNPQRRRR) the chain is Cytoplasmic. Residues 9–29 (LWWVLALLLAGGLATTLVSMA) form a helical; Signal-anchor for type II membrane protein membrane-spanning segment. At 30 to 156 (LQRNVAYLYT…AAANQGGALR (127 aa)) the chain is on the periplasmic side. Heme contacts are provided by histidine 123 and tyrosine 127. The disordered stretch occupies residues 135–156 (KMGSAHRKHDVPAAANQGGALR).

This sequence belongs to the CcmE/CycJ family.

Its subcellular location is the cell inner membrane. Functionally, heme chaperone required for the biogenesis of c-type cytochromes. Transiently binds heme delivered by CcmC and transfers the heme to apo-cytochromes in a process facilitated by CcmF and CcmH. This chain is Cytochrome c-type biogenesis protein CcmE 2, found in Xanthomonas oryzae pv. oryzae (strain MAFF 311018).